A 120-amino-acid chain; its full sequence is Large ribosomal subunit protein uL18 (120 aa).

The protein belongs to the universal ribosomal protein uL18 family. In terms of assembly, part of the 50S ribosomal subunit; part of the 5S rRNA/L5/L18/L25 subcomplex. Contacts the 5S and 23S rRNAs.

This is one of the proteins that bind and probably mediate the attachment of the 5S RNA into the large ribosomal subunit, where it forms part of the central protuberance. The chain is Large ribosomal subunit protein uL18 from Oleidesulfovibrio alaskensis (strain ATCC BAA-1058 / DSM 17464 / G20) (Desulfovibrio alaskensis).